Reading from the N-terminus, the 232-residue chain is Glutathione S-transferase U10 (232 aa).

The region spanning 6 to 85 (SKVILHGTWI…YIDETWTNSP (80 aa)) is the GST N-terminal domain. Residues 16 to 17 (ST), 42 to 43 (NK), 56 to 57 (KI), and 69 to 70 (ES) contribute to the glutathione site. The region spanning 91-226 (DPYERAQVRF…FIQKYRQKCL (136 aa)) is the GST C-terminal domain.

This sequence belongs to the GST superfamily. Tau family.

It localises to the cytoplasm. It is found in the cytosol. The catalysed reaction is RX + glutathione = an S-substituted glutathione + a halide anion + H(+). In terms of biological role, may be involved in the conjugation of reduced glutathione to a wide number of exogenous and endogenous hydrophobic electrophiles and have a detoxification role against certain herbicides. In Arabidopsis thaliana (Mouse-ear cress), this protein is Glutathione S-transferase U10 (GSTU10).